Here is a 354-residue protein sequence, read N- to C-terminus: Ornithine transcarbamylase, mitochondrial (354 aa).

A mitochondrion-targeting transit peptide spans 1 to 32 (MLFNLRILLNNAAFRNGHNFMVRNFRCGQPLQ). Lysine 70 carries the post-translational modification N6-acetyllysine; alternate. Residue lysine 70 is modified to N6-succinyllysine; alternate. Lysine 80 is subject to N6-succinyllysine. Lysine 88 carries the N6-acetyllysine; alternate modification. Residue lysine 88 is modified to N6-succinyllysine; alternate. Residue 90–93 (STRT) participates in carbamoyl phosphate binding. Serine 133 carries the post-translational modification Phosphoserine. Arginine 141 is a carbamoyl phosphate binding site. Lysine 144 is subject to N6-acetyllysine; alternate. Residue lysine 144 is modified to N6-succinyllysine; alternate. The carbamoyl phosphate site is built by histidine 168 and glutamine 171. L-ornithine is bound at residue asparagine 199. N6-acetyllysine; alternate is present on residues lysine 221, lysine 231, and lysine 238. An N6-succinyllysine; alternate mark is found at lysine 221, lysine 231, and lysine 238. Lysine 243 carries the N6-acetyllysine modification. L-ornithine contacts are provided by aspartate 263, serine 267, and methionine 268. Residues lysine 274 and lysine 289 each carry the N6-succinyllysine modification. An N6-acetyllysine; alternate modification is found at lysine 292. An N6-succinyllysine; alternate modification is found at lysine 292. Cysteine 303 (proton acceptor) is an active-site residue. 303 to 304 (CL) provides a ligand contact to carbamoyl phosphate. Lysine 307 carries the N6-acetyllysine; alternate modification. Lysine 307 bears the N6-succinyllysine; alternate mark. Arginine 330 is a binding site for carbamoyl phosphate.

It belongs to the aspartate/ornithine carbamoyltransferase superfamily. OTCase family. Homotrimer. In terms of processing, acetylation at Lys-88 negatively regulates ornithine carbamoyltransferase activity in response to nutrient signals. As to expression, mainly expressed in liver and intestinal mucosa.

It localises to the mitochondrion matrix. The enzyme catalyses carbamoyl phosphate + L-ornithine = L-citrulline + phosphate + H(+). The protein operates within nitrogen metabolism; urea cycle; L-citrulline from L-ornithine and carbamoyl phosphate: step 1/1. With respect to regulation, negatively regulated by lysine acetylation. Functionally, catalyzes the second step of the urea cycle, the condensation of carbamoyl phosphate with L-ornithine to form L-citrulline. The urea cycle ensures the detoxification of ammonia by converting it to urea for excretion. The polypeptide is Ornithine transcarbamylase, mitochondrial (Homo sapiens (Human)).